The following is a 606-amino-acid chain: Urocanate reductase (606 aa).

Positions 1 to 40 (MSNLSRRNFITGGAIAALGGTLAIAGCAPKGESSSTVAGA) form a signal peptide, tat-type signal. Thr111 carries the post-translational modification FMN phosphoryl threonine. FAD is bound by residues Ala163, Glu182, Thr191, Gly195, Gly196, Ala197, Ala305, and Asp373. Arg433 acts as the Proton donor in catalysis. Residues Glu572 and Ile588 each coordinate FAD.

Belongs to the FAD-dependent oxidoreductase 2 family. FRD/SDH subfamily. FAD serves as cofactor. The cofactor is FMN. Predicted to be exported by the Tat system. The position of the signal peptide cleavage has not been experimentally proven.

It catalyses the reaction dihydrourocanate + A = urocanate + AH2. In terms of biological role, catalyzes the two-electron reduction of urocanate to dihydrourocanate (also named imidazole propionate or deamino-histidine). Dihydrourocanate is present at higher concentrations in subjects with type 2 diabetes, and directly impairs glucose tolerance and insulin signaling at the level of insulin receptor substrate (IRS) through activation of p38 gamma (MAPK12)-p62-mTORC1. Therefore, the UrdA enzyme from the gut bacteria E.lenta strain DSM 2243 may contribute to the pathogenesis of type 2 diabetes by producing the microbial metabolite dihydrourocanate. The protein is Urocanate reductase of Eggerthella lenta (strain ATCC 25559 / DSM 2243 / CCUG 17323 / JCM 9979 / KCTC 3265 / NCTC 11813 / VPI 0255 / 1899 B) (Eubacterium lentum).